Here is a 317-residue protein sequence, read N- to C-terminus: Porphobilinogen deaminase (317 aa).

Position 245 is an S-(dipyrrolylmethanemethyl)cysteine (C245).

It belongs to the HMBS family. Monomer. Requires dipyrromethane as cofactor.

It catalyses the reaction 4 porphobilinogen + H2O = hydroxymethylbilane + 4 NH4(+). The protein operates within porphyrin-containing compound metabolism; protoporphyrin-IX biosynthesis; coproporphyrinogen-III from 5-aminolevulinate: step 2/4. Its pathway is porphyrin-containing compound metabolism; chlorophyll biosynthesis. Tetrapolymerization of the monopyrrole PBG into the hydroxymethylbilane pre-uroporphyrinogen in several discrete steps. The protein is Porphobilinogen deaminase of Parasynechococcus marenigrum (strain WH8102).